The following is a 130-amino-acid chain: Small ribosomal subunit protein uS8 (130 aa).

It belongs to the universal ribosomal protein uS8 family. In terms of assembly, part of the 30S ribosomal subunit.

Functionally, one of the primary rRNA binding proteins, it binds directly to 16S rRNA central domain where it helps coordinate assembly of the platform of the 30S subunit. The polypeptide is Small ribosomal subunit protein uS8 (Natronomonas pharaonis (strain ATCC 35678 / DSM 2160 / CIP 103997 / JCM 8858 / NBRC 14720 / NCIMB 2260 / Gabara) (Halobacterium pharaonis)).